A 720-amino-acid polypeptide reads, in one-letter code: Long chain acyl-CoA synthetase 8 (720 aa).

At Met-1 the chain carries N-acetylmethionine. Ile-279–Lys-290 is a binding site for ATP. Positions Asp-554–Lys-582 are fatty acid-binding.

Belongs to the ATP-dependent AMP-binding enzyme family. The cofactor is Mg(2+).

The catalysed reaction is a long-chain fatty acid + ATP + CoA = a long-chain fatty acyl-CoA + AMP + diphosphate. The protein operates within lipid metabolism; fatty acid metabolism. Functionally, activation of long-chain fatty acids for both synthesis of cellular lipids, and degradation via beta-oxidation. Preferentially uses palmitate, palmitoleate, oleate and linoleate. This chain is Long chain acyl-CoA synthetase 8 (LACS8), found in Arabidopsis thaliana (Mouse-ear cress).